The sequence spans 224 residues: Large ribosomal subunit protein uL4 (224 aa).

The segment at 53–74 is disordered; that stretch reads RNRSEVSHSTKKPFKQKGTGNA.

It belongs to the universal ribosomal protein uL4 family. In terms of assembly, part of the 50S ribosomal subunit.

Functionally, one of the primary rRNA binding proteins, this protein initially binds near the 5'-end of the 23S rRNA. It is important during the early stages of 50S assembly. It makes multiple contacts with different domains of the 23S rRNA in the assembled 50S subunit and ribosome. Its function is as follows. Forms part of the polypeptide exit tunnel. In Chlamydia pneumoniae (Chlamydophila pneumoniae), this protein is Large ribosomal subunit protein uL4.